Here is a 415-residue protein sequence, read N- to C-terminus: UV excision repair protein RAD23 homolog B (415 aa).

The 79-residue stretch at 1-79 (MQVTLKTLQQ…VVVMVTKPKA (79 aa)) folds into the Ubiquitin-like domain. The disordered stretch occupies residues 80–175 (VTSAVPATTQ…STPGDSSRSN (96 aa)). Positions 84-143 (VPATTQQSSSPSTTTVSSSPAAAVAQAPAPTPALAPTSTPASTTPASTTASSEPAPTGAT) are enriched in low complexity. Threonine 155 bears the Phosphothreonine mark. 2 positions are modified to phosphoserine: serine 160 and serine 174. Phosphothreonine is present on threonine 186. The 41-residue stretch at 188-228 (QSYENMVTEIMSMGYEREQVIAALRASFNNPDRAVEYLLMG) folds into the UBA 1 domain. Position 199 is a phosphoserine (serine 199). Tyrosine 202 is modified (phosphotyrosine). Residues 274–317 (HPLEFLRNQPQFQQMRQIIQQNPSLLPALLQQIGRENPQLLQQI) form the STI1 domain. The interval 334 to 355 (EAGGQGGGGGGGGGGGGGGGGI) is disordered. Positions 336–355 (GGQGGGGGGGGGGGGGGGGI) are enriched in gly residues. The UBA 2 domain maps to 370 to 410 (PQEKEAIERLKALGFPEGLVIQAYFACEKNENLAANFLLQQ).

The protein belongs to the RAD23 family. In terms of assembly, component of the XPC complex composed of XPC, RAD23B and CETN2. Interacts with NGLY1 and PSMC1. Interacts with ATXN3. Interacts with AMFR. Interacts with VCP; the interaction is indirect and mediated by NGLY1.

The protein resides in the nucleus. It localises to the cytoplasm. In terms of biological role, multiubiquitin chain receptor involved in modulation of proteasomal degradation. Binds to polyubiquitin chains. Proposed to be capable to bind simultaneously to the 26S proteasome and to polyubiquitinated substrates and to deliver ubiquitinated proteins to the proteasome. May play a role in endoplasmic reticulum-associated degradation (ERAD) of misfolded glycoproteins by association with PNGase and delivering deglycosylated proteins to the proteasome. Its function is as follows. Involved in global genome nucleotide excision repair (GG-NER) by acting as component of the XPC complex. Cooperatively with Cetn2 appears to stabilize Xpc. May protect Xpc from proteasomal degradation. The XPC complex is proposed to represent the first factor bound at the sites of DNA damage and together with other core recognition factors, Xpa, RPA and the TFIIH complex, is part of the pre-incision (or initial recognition) complex. The XPC complex recognizes a wide spectrum of damaged DNA characterized by distortions of the DNA helix such as single-stranded loops, mismatched bubbles or single-stranded overhangs. The orientation of XPC complex binding appears to be crucial for inducing a productive NER. XPC complex is proposed to recognize and to interact with unpaired bases on the undamaged DNA strand which is followed by recruitment of the TFIIH complex and subsequent scanning for lesions in the opposite strand in a 5'-to-3' direction by the NER machinery. Cyclobutane pyrimidine dimers (CPDs) which are formed upon UV-induced DNA damage esacpe detection by the XPC complex due to a low degree of structural perurbation. Instead they are detected by the UV-DDB complex which in turn recruits and cooperates with the XPC complex in the respective DNA repair. In vitro, the XPC:RAD23B dimer is sufficient to initiate NER; it preferentially binds to cisplatin and UV-damaged double-stranded DNA and also binds to a variety of chemically and structurally diverse DNA adducts. XPC:RAD23B contacts DNA both 5' and 3' of a cisplatin lesion with a preference for the 5' side. Xpc:Rad22b induces a bend in DNA upon binding. Xpc:Rad23b stimulates the activity of DNA glycosylases Tdg and Smug1. In Rattus norvegicus (Rat), this protein is UV excision repair protein RAD23 homolog B (Rad23b).